Reading from the N-terminus, the 706-residue chain is Elongation factor G (706 aa).

The 290-residue stretch at 8 to 297 folds into the tr-type G domain; it reads ERVRNIGIAA…AVIDYLPAPT (290 aa). GTP contacts are provided by residues 17 to 24, 96 to 100, and 150 to 153; these read AHIDAGKT, DTPGH, and NKMD.

The protein belongs to the TRAFAC class translation factor GTPase superfamily. Classic translation factor GTPase family. EF-G/EF-2 subfamily.

It localises to the cytoplasm. Functionally, catalyzes the GTP-dependent ribosomal translocation step during translation elongation. During this step, the ribosome changes from the pre-translocational (PRE) to the post-translocational (POST) state as the newly formed A-site-bound peptidyl-tRNA and P-site-bound deacylated tRNA move to the P and E sites, respectively. Catalyzes the coordinated movement of the two tRNA molecules, the mRNA and conformational changes in the ribosome. This Cyanothece sp. (strain PCC 7425 / ATCC 29141) protein is Elongation factor G.